The following is an 813-amino-acid chain: Leucine--tRNA ligase (813 aa).

The 'HIGH' region motif lies at 40–51 (SYPSGSKLHAGH). The 'KMSKS' region signature appears at 572-576 (KMSKS). Lysine 575 is an ATP binding site.

The protein belongs to the class-I aminoacyl-tRNA synthetase family.

It is found in the cytoplasm. The catalysed reaction is tRNA(Leu) + L-leucine + ATP = L-leucyl-tRNA(Leu) + AMP + diphosphate. This Clostridium botulinum (strain ATCC 19397 / Type A) protein is Leucine--tRNA ligase.